Here is a 387-residue protein sequence, read N- to C-terminus: Formate-dependent phosphoribosylglycinamide formyltransferase (387 aa).

N(1)-(5-phospho-beta-D-ribosyl)glycinamide-binding positions include 12–13 (EL) and glutamate 72. Residues arginine 104, lysine 145, 150–155 (SSGKGQ), 185–188 (EEFI), and glutamate 193 contribute to the ATP site. The 192-residue stretch at 109-300 (DLAAKDLKLL…EFELHIRAIL (192 aa)) folds into the ATP-grasp domain. Residues glutamate 258 and glutamate 270 each coordinate Mg(2+). Residues aspartate 277, lysine 348, and 355-356 (RR) each bind N(1)-(5-phospho-beta-D-ribosyl)glycinamide.

This sequence belongs to the PurK/PurT family. In terms of assembly, homodimer.

The catalysed reaction is N(1)-(5-phospho-beta-D-ribosyl)glycinamide + formate + ATP = N(2)-formyl-N(1)-(5-phospho-beta-D-ribosyl)glycinamide + ADP + phosphate + H(+). It functions in the pathway purine metabolism; IMP biosynthesis via de novo pathway; N(2)-formyl-N(1)-(5-phospho-D-ribosyl)glycinamide from N(1)-(5-phospho-D-ribosyl)glycinamide (formate route): step 1/1. Its function is as follows. Involved in the de novo purine biosynthesis. Catalyzes the transfer of formate to 5-phospho-ribosyl-glycinamide (GAR), producing 5-phospho-ribosyl-N-formylglycinamide (FGAR). Formate is provided by PurU via hydrolysis of 10-formyl-tetrahydrofolate. In Leptospira borgpetersenii serovar Hardjo-bovis (strain JB197), this protein is Formate-dependent phosphoribosylglycinamide formyltransferase.